The primary structure comprises 258 residues: Tryptophan synthase alpha chain (258 aa).

Residues glutamate 47 and aspartate 58 each act as proton acceptor in the active site.

This sequence belongs to the TrpA family. In terms of assembly, tetramer of two alpha and two beta chains.

It catalyses the reaction (1S,2R)-1-C-(indol-3-yl)glycerol 3-phosphate + L-serine = D-glyceraldehyde 3-phosphate + L-tryptophan + H2O. Its pathway is amino-acid biosynthesis; L-tryptophan biosynthesis; L-tryptophan from chorismate: step 5/5. The alpha subunit is responsible for the aldol cleavage of indoleglycerol phosphate to indole and glyceraldehyde 3-phosphate. This is Tryptophan synthase alpha chain from Bacillus cereus (strain ZK / E33L).